A 961-amino-acid polypeptide reads, in one-letter code: Leucine-rich repeat-containing protein egg-6 (961 aa).

The signal sequence occupies residues 1 to 18 (MRWLTLIAVAHLIAFLSS). Residues 19–854 (AEITCPRIPE…EQNERHRNIR (836 aa)) lie on the Extracellular side of the membrane. 17 LRR repeats span residues 60–78 (IDEL…SLPF), 79–101 (NGLR…AWRH), 103–124 (EATI…VFGN), 125–148 (LSTL…AFNG), 150–172 (SALT…SLDA), 174–197 (KASL…ILRN), 199–222 (ANLM…LMNL), 223–245 (PFLR…AFMN), 247–269 (PQLQ…RLQG), 270–294 (FKNL…DLPN), 305–316 (ITKIETLAFSNN), 317–339 (PNLQ…SFES), 340–363 (LDKL…MFDG), 364–387 (MKNL…SFAQ), 388–411 (LAHL…TFDK), 413–435 (SKLF…VFKK), and 437–455 (ISNI…SFNE). The helical transmembrane segment at 855 to 875 (IITAIALAFVGAVTVVVIIFF) threads the bilayer. The Cytoplasmic segment spans residues 876 to 961 (VNYTKKQRRL…PQAVSHRSRH (86 aa)). A disordered region spans residues 890-943 (VYRSSPSSSGSSGQNAANESGRSSAAPSPIRPPLMNIPKTPNNRTMESTFGQPQ). The segment covering 893-902 (SSPSSSGSSG) has biased composition (low complexity). Over residues 928–943 (KTPNNRTMESTFGQPQ) the composition is skewed to polar residues.

As to expression, in L1 larvae, expressed in a subset of epithelial cells including epidermal, vulval and rectal cells and the excretory duct and pore. Also detected in some neurons. Absent from internal epithelia such as the gut and pharyngeal tubes.

Its subcellular location is the apical cell membrane. Functionally, required for apical extracellular matrix organization and epithelial junction maintenance. The protein is Leucine-rich repeat-containing protein egg-6 of Caenorhabditis elegans.